Reading from the N-terminus, the 308-residue chain is Uricase-2 (308 aa).

Residues lysine 17 and threonine 63 each act as charge relay system in the active site. Urate contacts are provided by threonine 63, aspartate 64, phenylalanine 165, arginine 182, valine 237, glutamine 238, and asparagine 264. The Charge relay system role is filled by histidine 266. The short motif at 306 to 308 (SKL) is the Microbody targeting signal element.

This sequence belongs to the uricase family. Homotetramer. In terms of tissue distribution, expressed predominantly in the uninfected cells of the central tissue of the root nodule. Also expressed in the nodule parenchyma cells and vascular tissue, in the roots, stems and leaves of uninfected adult plants, and in the cotyledons, roots and hypocotyls of developing seedlings. Localized to the metaxylem parenchyma cells and phloem fibers of developing roots.

The protein localises to the peroxisome. The catalysed reaction is urate + O2 + H2O = 5-hydroxyisourate + H2O2. It participates in purine metabolism; urate degradation; (S)-allantoin from urate: step 1/3. Functionally, catalyzes the oxidation of uric acid to 5-hydroxyisourate, which is further processed to form (S)-allantoin. This Phaseolus vulgaris (Kidney bean) protein is Uricase-2 (URIII).